Here is a 537-residue protein sequence, read N- to C-terminus: Mitochondria-eating protein (537 aa).

The segment at 1–273 is interaction with YWHAG/14-3-3 protein gamma; sequence MADNLRRLVS…PCSRSHSRSR (273 aa). A phosphoserine mark is found at S85, S127, S154, and S157. A coiled-coil region spans residues 115-253; sequence GTRDIQQLDA…SAEKSVLQGR (139 aa). Disordered stretches follow at residues 171 to 221 and 249 to 293; these read QLKS…ANQR and VLQG…AKLS. Residues 179-217 are compositionally biased toward basic and acidic residues; the sequence is EESRHRNSDRRRSEKRGSERRRVELRGSEQRVSDLDRRS. Residues 253–287 show a composition bias toward low complexity; that stretch reads RSARSRSPSPAPCSRSHSRSRSTSPSSAKARTPSP. A phosphoserine mark is found at S286 and S508.

The protein belongs to the MIEAP family. As to quaternary structure, interacts (via coiled-coil domains) with BNIP3L (via BH3 domain). Interacts (via coiled-coil domains) with BNIP3 (via BH3 domain). Interacts with YWHAG/14-3-3 protein gamma; a protein that also plays a role in MALM.

It is found in the cytoplasm. The protein resides in the cytosol. Its subcellular location is the mitochondrion outer membrane. It localises to the mitochondrion matrix. Its function is as follows. Key regulator of mitochondrial quality that mediates the repairing or degradation of unhealthy mitochondria in response to mitochondrial damage. Mediator of mitochondrial protein catabolic process (also named MALM) by mediating the degradation of damaged proteins inside mitochondria by promoting the accumulation in the mitochondrial matrix of hydrolases that are characteristic of the lysosomal lumen. Also involved in mitochondrion degradation of damaged mitochondria by promoting the formation of vacuole-like structures (named MIV), which engulf and degrade unhealthy mitochondria by accumulating lysosomes. The physical interaction of SPATA18/MIEAP, BNIP3 and BNIP3L/NIX at the mitochondrial outer membrane regulates the opening of a pore in the mitochondrial double membrane in order to mediate the translocation of lysosomal proteins from the cytoplasm to the mitochondrial matrix. Binds cardiolipin. May form molecular condensates (non-membrane-bounded organelles) within mitochondria that compartmentalize and promote cardiolipin metabolism. This is Mitochondria-eating protein (SPATA18) from Bos taurus (Bovine).